Consider the following 612-residue polypeptide: Dihydroxy-acid dehydratase (612 aa).

Aspartate 81 provides a ligand contact to Mg(2+). Cysteine 122 serves as a coordination point for [2Fe-2S] cluster. The Mg(2+) site is built by aspartate 123 and lysine 124. Lysine 124 is modified (N6-carboxylysine). Residue cysteine 193 participates in [2Fe-2S] cluster binding. Glutamate 489 serves as a coordination point for Mg(2+). Residue serine 515 is the Proton acceptor of the active site.

Belongs to the IlvD/Edd family. As to quaternary structure, homodimer. [2Fe-2S] cluster serves as cofactor. The cofactor is Mg(2+).

The enzyme catalyses (2R)-2,3-dihydroxy-3-methylbutanoate = 3-methyl-2-oxobutanoate + H2O. It catalyses the reaction (2R,3R)-2,3-dihydroxy-3-methylpentanoate = (S)-3-methyl-2-oxopentanoate + H2O. The protein operates within amino-acid biosynthesis; L-isoleucine biosynthesis; L-isoleucine from 2-oxobutanoate: step 3/4. It participates in amino-acid biosynthesis; L-valine biosynthesis; L-valine from pyruvate: step 3/4. In terms of biological role, functions in the biosynthesis of branched-chain amino acids. Catalyzes the dehydration of (2R,3R)-2,3-dihydroxy-3-methylpentanoate (2,3-dihydroxy-3-methylvalerate) into 2-oxo-3-methylpentanoate (2-oxo-3-methylvalerate) and of (2R)-2,3-dihydroxy-3-methylbutanoate (2,3-dihydroxyisovalerate) into 2-oxo-3-methylbutanoate (2-oxoisovalerate), the penultimate precursor to L-isoleucine and L-valine, respectively. The protein is Dihydroxy-acid dehydratase of Xanthomonas euvesicatoria pv. vesicatoria (strain 85-10) (Xanthomonas campestris pv. vesicatoria).